The chain runs to 105 residues: Large ribosomal subunit protein eL36 (105 aa).

Residues 9–31 (VGLNKGHKVTKNVSKPRHSRRRR) are disordered. A compositionally biased stretch (basic residues) spans 13–31 (KGHKVTKNVSKPRHSRRRR). Position 62 is an N6-acetyllysine (K62).

This sequence belongs to the eukaryotic ribosomal protein eL36 family. Component of the large ribosomal subunit.

Its subcellular location is the cytoplasm. The protein localises to the cytosol. Component of the large ribosomal subunit. The ribosome is a large ribonucleoprotein complex responsible for the synthesis of proteins in the cell. The protein is Large ribosomal subunit protein eL36 (RPL36) of Oryctolagus cuniculus (Rabbit).